The sequence spans 199 residues: Translation machinery-associated protein 22 (199 aa).

An SUI1 domain is found at valine 97–leucine 168.

The protein belongs to the DENR family. In terms of assembly, interacts with the 40S ribosomal subunit.

The protein resides in the cytoplasm. The sequence is that of Translation machinery-associated protein 22 (TMA22) from Eremothecium gossypii (strain ATCC 10895 / CBS 109.51 / FGSC 9923 / NRRL Y-1056) (Yeast).